Consider the following 205-residue polypeptide: Holliday junction resolvase RecU (205 aa).

Residues 1 to 22 (MAINYPAGTRRRTAQAKNTMRT) are disordered. Threonine 90, aspartate 92, aspartate 105, and glutamine 124 together coordinate Mg(2+).

Belongs to the RecU family. It depends on Mg(2+) as a cofactor.

It localises to the cytoplasm. It catalyses the reaction Endonucleolytic cleavage at a junction such as a reciprocal single-stranded crossover between two homologous DNA duplexes (Holliday junction).. In terms of biological role, endonuclease that resolves Holliday junction intermediates in genetic recombination. Cleaves mobile four-strand junctions by introducing symmetrical nicks in paired strands. Promotes annealing of linear ssDNA with homologous dsDNA. Required for DNA repair, homologous recombination and chromosome segregation. The chain is Holliday junction resolvase RecU from Leuconostoc citreum (strain KM20).